The chain runs to 427 residues: Probable protein phosphatase 2C 64 (427 aa).

The disordered stretch occupies residues 1 to 36 (MGNCVARSGTAVDAGGDGGEDGKRRRRRWKAPREDQ). Residues 53-331 (TATVYTQQGR…DDCAVVCLYL (279 aa)) form the PPM-type phosphatase domain. 4 residues coordinate Mn(2+): Asp89, Gly90, Asp276, and Asp322.

Belongs to the PP2C family. Requires Mg(2+) as cofactor. Mn(2+) is required as a cofactor.

The catalysed reaction is O-phospho-L-seryl-[protein] + H2O = L-seryl-[protein] + phosphate. It catalyses the reaction O-phospho-L-threonyl-[protein] + H2O = L-threonyl-[protein] + phosphate. This Oryza sativa subsp. japonica (Rice) protein is Probable protein phosphatase 2C 64.